The chain runs to 400 residues: Elongation factor Tu (400 aa).

In terms of domain architecture, tr-type G spans 10–208 (KPHMNVGTIG…AMDSYFPDPV (199 aa)). The interval 19 to 26 (GHIDHGKT) is G1. 19–26 (GHIDHGKT) lines the GTP pocket. T26 lines the Mg(2+) pocket. Positions 60–64 (GITIN) are G2. Residues 81 to 84 (DCPG) are G3. GTP-binding positions include 81-85 (DCPGH) and 136-139 (NKVD). Residues 136–139 (NKVD) form a G4 region. A G5 region spans residues 174–176 (SAL).

It belongs to the TRAFAC class translation factor GTPase superfamily. Classic translation factor GTPase family. EF-Tu/EF-1A subfamily. Monomer.

The protein localises to the cytoplasm. It carries out the reaction GTP + H2O = GDP + phosphate + H(+). In terms of biological role, GTP hydrolase that promotes the GTP-dependent binding of aminoacyl-tRNA to the A-site of ribosomes during protein biosynthesis. This is Elongation factor Tu from Fervidobacterium nodosum (strain ATCC 35602 / DSM 5306 / Rt17-B1).